A 158-amino-acid chain; its full sequence is MAAGEVKSVLFVCLGNICRSPIAEAVFRKLVTDEKVENKWRIDSAATSTYEIGNPPDYRGQTCMKKHGITMNHIARQVTKDDFQTFDYILCMDESNLRDLKRKSNQVKDCKAKIELLGAYDPQKQLIIEDPYYGNEKDFETVYEQCVRCCKAFLEKPH.

Alanine 2 is subject to N-acetylalanine. The active-site Nucleophile is the cysteine 13. Arginine 19 is an active-site residue. Aspartate 130 (proton donor) is an active-site residue. 2 positions are modified to phosphotyrosine: tyrosine 132 and tyrosine 133.

Belongs to the low molecular weight phosphotyrosine protein phosphatase family.

It is found in the cytoplasm. It carries out the reaction O-phospho-L-tyrosyl-[protein] + H2O = L-tyrosyl-[protein] + phosphate. The enzyme catalyses a phosphate monoester + H2O = an alcohol + phosphate. Acts on tyrosine phosphorylated proteins, low-MW aryl phosphates and natural and synthetic acyl phosphates. The polypeptide is Low molecular weight phosphotyrosine protein phosphatase (ACP1) (Gallus gallus (Chicken)).